The following is a 239-amino-acid chain: Adapter protein MecA (239 aa).

Basic and acidic residues predominate over residues 118 to 128 (EQRTKEKEAQG). A disordered region spans residues 118–137 (EQRTKEKEAQGSKRQKSSAR).

This sequence belongs to the MecA family. In terms of assembly, homodimer.

Its function is as follows. Enables the recognition and targeting of unfolded and aggregated proteins to the ClpC protease or to other proteins involved in proteolysis. This Staphylococcus aureus (strain bovine RF122 / ET3-1) protein is Adapter protein MecA.